Here is a 270-residue protein sequence, read N- to C-terminus: MSRLEQRFAQLKTEGRAVLVTFITAGDPGYDTSLKVLKGLPAAGADVIELGMPFTDPMADGVAIQLATLRALDAGQTLLKTLQMVSEFRVDDQTTPIVLMGYYNPIHRFGVEAFVAQAKEAGVDGLIIVDLPPEHDAELATPAQASGIDFIRLTTPTTDDARLPRVLERSSGFVYYVSVAGVTGAGSATTEHVTEAIARLRRHTSLPISVGFGIRTPEQAAAIARLADGVVVGSAFVDKIATAESPEQAIDGVLTLCAALAEGVRNARVS.

Catalysis depends on proton acceptor residues Glu-49 and Asp-60.

The protein belongs to the TrpA family. As to quaternary structure, tetramer of two alpha and two beta chains.

It catalyses the reaction (1S,2R)-1-C-(indol-3-yl)glycerol 3-phosphate + L-serine = D-glyceraldehyde 3-phosphate + L-tryptophan + H2O. The protein operates within amino-acid biosynthesis; L-tryptophan biosynthesis; L-tryptophan from chorismate: step 5/5. Its function is as follows. The alpha subunit is responsible for the aldol cleavage of indoleglycerol phosphate to indole and glyceraldehyde 3-phosphate. The chain is Tryptophan synthase alpha chain from Pseudomonas syringae pv. tomato (strain ATCC BAA-871 / DC3000).